Here is a 2090-residue protein sequence, read N- to C-terminus: Host cell factor 1 (2090 aa).

An N-acetylalanine modification is found at alanine 2. A Phosphoserine modification is found at serine 6. 5 Kelch repeats span residues 44–89 (LIVV…GFVC), 93–140 (RLLV…RLGH), 148–194 (KCYL…ITYG), 217–265 (KLVI…TIGN), and 266–313 (KMYV…LMDT). Glycyl lysine isopeptide (Lys-Gly) (interchain with G-Cter in ubiquitin) cross-links involve residues lysine 105, lysine 163, and lysine 244. Residue lysine 282 forms a Glycyl lysine isopeptide (Lys-Gly) (interchain with G-Cter in SUMO2) linkage. The residue at position 288 (lysine 288) is an N6-acetyllysine. Lysine 363 participates in a covalent cross-link: Glycyl lysine isopeptide (Lys-Gly) (interchain with G-Cter in ubiquitin). The region spanning 366–469 (PPARVQLVRA…TIQVLPTVPG (104 aa)) is the Fibronectin type-III 1 domain. The segment at 407–434 (ATATSPTPNPVPSVPANPPKSPAPAAAA) is disordered. Phosphoserine is present on serine 411. The span at 413-428 (TPNPVPSVPANPPKSP) shows a compositional bias: pro residues. Positions 500–550 (LVTMRPAGQAGKAPVTVTSLPASVRMVVPTQSAQGTVIGSNPQMSGMAALA) are required for interaction with OGT. Omega-N-methylarginine is present on residues arginine 504 and arginine 524. Serine 598, serine 666, and serine 669 each carry phosphoserine. The segment at 610–722 (LKTAAAQVGT…KGPLPAGTIL (113 aa)) is interaction with SIN3A. Residues 750-902 (ILGISSVSPS…SLAGAGAHST (153 aa)) form an interaction with ZBTB17 region. Lysine 813 carries the post-translational modification N6-acetyllysine. Positions 813 to 912 (KIITAVPKIA…SASLATPITT (100 aa)) are interaction with GABP2. HCF repeat repeat units lie at residues 1010 to 1035 (TLVC…TVVA), 1072 to 1097 (VRVC…ATSN), and 1101 to 1126 (QHGC…AMSS). The tract at residues 1098-1140 (MAGQHGCSNPPCETHETGTTSTATTAMSSMGTGQQRDTRHTSS) is disordered. A compositionally biased stretch (low complexity) spans 1114–1130 (TGTTSTATTAMSSMGTG). Residues 1157 to 1182 (TQGTVKPQCQTQQANMTNTTMTVQAT) form an HCF repeat 4; degenerate repeat. Serine 1204 carries the post-translational modification Phosphoserine. Arginine 1216 is subject to Asymmetric dimethylarginine. Serine 1223 bears the Phosphoserine mark. HCF repeat repeat units lie at residues 1295–1320 (TQVC…SNAG) and 1323–1348 (QRVC…ATSN). 2 disordered regions span residues 1302–1374 (PCET…TTST) and 1444–1486 (TVTS…TTVS). Over residues 1308–1321 (TGTTNTATTSNAGS) the composition is skewed to low complexity. The stretch at 1358–1383 (QQPAGGRPCETHQTTSTGTTMSVSVG) is one HCF repeat 7; degenerate repeat. The HCF repeat 8 repeat unit spans residues 1423–1448 (QRVCSNPPCETHETGTTHTATTVTSN). Residues 1465 to 1475 (VVSTQGDSANI) are compositionally biased toward polar residues. Positions 1476–1486 (TSSSGITTTVS) are enriched in low complexity. Threonine 1500 carries the phosphothreonine modification. Phosphoserine occurs at positions 1506, 1559, and 1826. 2 consecutive Fibronectin type-III domains span residues 1853–1943 (PPPP…TCLP) and 1945–2061 (FPGA…TSKD). Residues lysine 1862 and lysine 1863 each participate in a glycyl lysine isopeptide (Lys-Gly) (interchain with G-Cter in ubiquitin) cross-link. Serine 1893 carries the phosphoserine modification. Residues 2049–2090 (ATQVRWLQETSKDSSGTKPASKRPMSSPEMKSAPKKSKADGQ) are disordered. Lysine 2060 is subject to N6-acetyllysine. Lysine 2079 participates in a covalent cross-link: Glycyl lysine isopeptide (Lys-Gly) (interchain with G-Cter in SUMO2).

In terms of assembly, composed predominantly of six polypeptides ranging from 110 to 150 kDa and a minor 300 kDa polypeptide. The majority of N- and C-terminal cleavage products remain tightly, albeit non-covalently, associated. Interacts with POU2F1, CREB3, ZBTB17, EGR2, E2F4, CREBZF, SP1, GABP2, Sin3 HDAC complex (SIN3A, HDAC1, HDAC2, SUDS3), SAP30, SIN3B and FHL2. Component of a MLL1 complex, composed of at least the core components KMT2A/MLL1, ASH2L, HCFC1, WDR5 and RBBP5, as well as the facultative components BACC1, CHD8, DPY30, E2F6, HCFC2, HSP70, INO80C, KANSL1, LAS1L, MAX, MCRS1, MEN1, MGA, KAT8, PELP1, PHF20, PRP31, RING2, RUVBL1, RUVBL2, SENP3, TAF1, TAF4, TAF6, TAF7, TAF9 and TEX10. Component of a THAP1/THAP3-HCFC1-OGT complex that is required for the regulation of the transcriptional activity of RRM1. Interacts directly with THAP3 (via its HBM). Interacts (via the Kelch-repeat domain) with THAP1 (via the HBM); the interaction recruits HCHC1 to the RRM1. Interacts directly with OGT; the interaction, which requires the HCFC1 cleavage site domain, glycosylates and promotes the proteolytic processing of HCFC1 and retains OGT in the nucleus. Component of the SET1 complex, at least composed of the catalytic subunit (SETD1A or SETD1B), WDR5, WDR82, RBBP5, ASH2L, CXXC1, HCFC1 and DPY30. Component of the NSL complex at least composed of MOF/KAT8, KANSL1, KANSL2, KANSL3, MCRS1, PHF20, OGT1/OGT, WDR5 and HCFC1. Component of a complex at least composed of ZNF335, HCFC1, CCAR2, EMSY, MKI67, RBBP5, ASH2L and WDR5; the complex is formed as a result of interactions between components of a nuclear receptor-mediated transcription complex and a histone methylation complex. Within the complex interacts with ZNF335. Interacts with TET2 and TET3. Interacts with HCFC1R1. Interacts with THAP11. Interacts (via Kelch domain) with KMT2E (via HBM motif). Interacts with E2F1. Accessory scaffold component of the polycomb repressive deubiquitinase (PR-DUB) complex, at least composed of BAP1, one of ASXL1, ASXL2 or (probably) ASXL3 and one of MBD5 or MBD6; the PR-DUB core associates with a number of accessory proteins, including FOXK1, FOXK2, KDM1B, HCFC1, YY1 and OGT. Interacts with YY1 (via Gly-rich region); the interaction is direct. Interacts with BAP1 (via HBM-like motif). Post-translationally, proteolytically cleaved at one or several PPCE--THET sites within the HCF repeats. Cleavage is promoted by O-glycosylation. Further cleavage of the primary N- and C-terminal chains results in a 'trimming' and accumulation of the smaller chains. Cleavage is promoted by O-glycosylation. O-glycosylated. GlcNAcylation by OGT promotes proteolytic processing. In terms of processing, ubiquitinated. Lys-1862 and Lys-1863 are ubiquitinated both via 'Lys-48'- and 'Lys-63'-linked polyubiquitin chains. BAP1 mediated deubiquitination of 'Lys-48'-linked polyubiquitin chains; deubiquitination by BAP1 does not seem to stabilize the protein.

Its subcellular location is the cytoplasm. The protein resides in the nucleus. Functionally, transcriptional coregulator. Serves as a scaffold protein, bridging interactions between transcription factors, including THAP11 and ZNF143, and transcriptional coregulators. Involved in control of the cell cycle. Also antagonizes transactivation by ZBTB17 and GABP2; represses ZBTB17 activation of the p15(INK4b) promoter and inhibits its ability to recruit p300. Coactivator for EGR2 and GABP2. Tethers the chromatin modifying Set1/Ash2 histone H3 'Lys-4' methyltransferase (H3K4me) and Sin3 histone deacetylase (HDAC) complexes (involved in the activation and repression of transcription respectively) together. As part of the NSL complex it may be involved in acetylation of nucleosomal histone H4 on several lysine residues. Recruits KMT2E to E2F1 responsive promoters promoting transcriptional activation and thereby facilitates G1 to S phase transition. Modulates expression of homeobox protein PDX1, perhaps acting in concert with transcription factor E2F1, thereby regulating pancreatic beta-cell growth and glucose-stimulated insulin secretion. May negatively modulate transcriptional activity of FOXO3. The chain is Host cell factor 1 from Mesocricetus auratus (Golden hamster).